Consider the following 1469-residue polypeptide: uncharacterized protein (1469 aa).

Residues 146–180 (GDHITPKEEEEKEKEKEKEKEKEKEKEKEKEKDSE) show a composition bias toward basic and acidic residues. Disordered regions lie at residues 146–186 (GDHI…LQEQ), 231–255 (IQNN…DNNN), 306–344 (TTTT…GGDS), 430–455 (LNFN…PYHY), 520–560 (PVKN…NNNS), 654–706 (TTTT…PLVR), 719–755 (RTQT…VKNQ), 881–958 (YNNI…NIIN), and 1329–1369 (NCSS…NSSN). Low complexity-rich tracts occupy residues 232–241 (QNNQNNQNNN), 306–327 (TTTT…ISNT), 430–449 (LNFN…NNNN), 523–559 (NNNN…INNN), and 654–693 (TTTT…TTTP). Polar residues predominate over residues 719-731 (RTQTQLQTKIQPK). Pro residues predominate over residues 732–749 (SPQPQPTAAPEPQKPPTP). Composition is skewed to low complexity over residues 1329–1347 (NCSS…SGSE) and 1354–1369 (RSNT…NSSN).

This is an uncharacterized protein from Dictyostelium discoideum (Social amoeba).